A 154-amino-acid chain; its full sequence is Nuclear cap-binding protein subunit 2 (154 aa).

Residues Tyr10, Tyr33, 102–106, 113–117, and 123–124 contribute to the mRNA site; these read RVDWD, RQYGR, and QV. The RRM domain maps to 30–108; it reads CTLYVGNLSF…RLIRVDWDAG (79 aa).

This sequence belongs to the RRM NCBP2 family. As to quaternary structure, component of the nuclear cap-binding complex (CBC), a heterodimer composed of Cbp80 and Cbp20 that interacts with m7GpppG-capped RNA. Interacts with Ars2.

The protein resides in the nucleus. Its function is as follows. Component of the cap-binding complex (CBC), which binds co-transcriptionally to the 5' cap of pre-mRNAs and is involved in various processes such as pre-mRNA splicing and RNA-mediated gene silencing (RNAi). The CBC complex is involved in miRNA-mediated RNA interference via its interaction with Ars2 and is required for primary microRNAs (miRNAs) processing. Also involved in innate immunity via the short interfering RNAs (siRNAs) processing machinery by restricting the viral RNA production. In the CBC complex, Cbp20 recognizes and binds capped RNAs (m7GpppG-capped RNA) but requires Cbp80 to stabilize the movement of its N-terminal loop and lock the CBC into a high affinity cap-binding state with the cap structure. This is Nuclear cap-binding protein subunit 2 (Cbp20) from Drosophila melanogaster (Fruit fly).